A 336-amino-acid chain; its full sequence is tRNA N6-adenosine threonylcarbamoyltransferase (336 aa).

Fe cation contacts are provided by histidine 114 and histidine 118. Substrate contacts are provided by residues 136-140, aspartate 169, glycine 182, aspartate 186, and asparagine 275; that span reads LVSGG. Fe cation is bound at residue aspartate 301.

The protein belongs to the KAE1 / TsaD family. Requires Fe(2+) as cofactor.

It is found in the cytoplasm. It catalyses the reaction L-threonylcarbamoyladenylate + adenosine(37) in tRNA = N(6)-L-threonylcarbamoyladenosine(37) in tRNA + AMP + H(+). Required for the formation of a threonylcarbamoyl group on adenosine at position 37 (t(6)A37) in tRNAs that read codons beginning with adenine. Is involved in the transfer of the threonylcarbamoyl moiety of threonylcarbamoyl-AMP (TC-AMP) to the N6 group of A37, together with TsaE and TsaB. TsaD likely plays a direct catalytic role in this reaction. This chain is tRNA N6-adenosine threonylcarbamoyltransferase, found in Streptococcus gordonii (strain Challis / ATCC 35105 / BCRC 15272 / CH1 / DL1 / V288).